Here is a 79-residue protein sequence, read N- to C-terminus: UPF0291 protein SAV1341 (79 aa).

The interval 56 to 79 (IDPEGNDVTPEKIKEIQQKRDNKN) is disordered. Residues 64–79 (TPEKIKEIQQKRDNKN) are compositionally biased toward basic and acidic residues.

The protein belongs to the UPF0291 family.

It localises to the cytoplasm. This chain is UPF0291 protein SAV1341, found in Staphylococcus aureus (strain Mu50 / ATCC 700699).